Consider the following 192-residue polypeptide: Ion-translocating oxidoreductase complex subunit B (192 aa).

The segment at 1–26 (MTAIWIAIAALSALALAFGLVLGYAS) is hydrophobic. A 4Fe-4S domain is found at 32-91 (ENDPIVEEVEAMLPQSQCGQCGYPGCRPYAEAVSLNGESINKCGPGGEAMMLKLAEKLNV). [4Fe-4S] cluster contacts are provided by cysteine 49, cysteine 52, cysteine 57, cysteine 74, cysteine 117, cysteine 120, cysteine 123, cysteine 127, cysteine 147, cysteine 150, cysteine 153, and cysteine 157. 2 4Fe-4S ferredoxin-type domains span residues 108–137 (HVAW…GSTK) and 138–167 (AVHT…LRPI).

It belongs to the 4Fe4S bacterial-type ferredoxin family. RnfB subfamily. The complex is composed of six subunits: RnfA, RnfB, RnfC, RnfD, RnfE and RnfG. The cofactor is [4Fe-4S] cluster.

The protein resides in the cell inner membrane. Its function is as follows. Part of a membrane-bound complex that couples electron transfer with translocation of ions across the membrane. This chain is Ion-translocating oxidoreductase complex subunit B, found in Pectobacterium atrosepticum (strain SCRI 1043 / ATCC BAA-672) (Erwinia carotovora subsp. atroseptica).